The primary structure comprises 922 residues: Isoleucine--tRNA ligase (922 aa).

The 'HIGH' region motif lies at proline 58–histidine 68. Glutamate 552 serves as a coordination point for L-isoleucyl-5'-AMP. The 'KMSKS' region signature appears at lysine 593–serine 597. Lysine 596 contributes to the ATP binding site. Positions 885, 888, 905, and 908 each coordinate Zn(2+).

This sequence belongs to the class-I aminoacyl-tRNA synthetase family. IleS type 1 subfamily. Monomer. Zn(2+) serves as cofactor.

Its subcellular location is the cytoplasm. It carries out the reaction tRNA(Ile) + L-isoleucine + ATP = L-isoleucyl-tRNA(Ile) + AMP + diphosphate. In terms of biological role, catalyzes the attachment of isoleucine to tRNA(Ile). As IleRS can inadvertently accommodate and process structurally similar amino acids such as valine, to avoid such errors it has two additional distinct tRNA(Ile)-dependent editing activities. One activity is designated as 'pretransfer' editing and involves the hydrolysis of activated Val-AMP. The other activity is designated 'posttransfer' editing and involves deacylation of mischarged Val-tRNA(Ile). This Ruthia magnifica subsp. Calyptogena magnifica protein is Isoleucine--tRNA ligase.